Consider the following 349-residue polypeptide: tRNA pseudouridine synthase D (349 aa).

Phe27 contacts substrate. The active-site Nucleophile is Asp80. Asn129 lines the substrate pocket. In terms of domain architecture, TRUD spans 155–303 (GVPNYFGAQR…VEAARRAMLL (149 aa)). Phe329 is a binding site for substrate.

It belongs to the pseudouridine synthase TruD family.

It carries out the reaction uridine(13) in tRNA = pseudouridine(13) in tRNA. Its function is as follows. Responsible for synthesis of pseudouridine from uracil-13 in transfer RNAs. This Shigella flexneri protein is tRNA pseudouridine synthase D.